The sequence spans 309 residues: uncharacterized protein (309 aa).

A helical membrane pass occupies residues 23–39; it reads RFNVAIIGGTGGLGRAI.

Belongs to the NmrA-type oxidoreductase family.

The protein localises to the membrane. This is an uncharacterized protein from Saccharomyces cerevisiae (strain ATCC 204508 / S288c) (Baker's yeast).